A 127-amino-acid chain; its full sequence is Mediator of RNA polymerase II transcription subunit 31 (127 aa).

It belongs to the Mediator complex subunit 31 family. As to quaternary structure, component of the Mediator complex, which is composed of at least 21 subunits that form three structurally distinct submodules. The Mediator head module contains MED6, MED8, MED11, SRB4/MED17, SRB5/MED18, ROX3/MED19, SRB2/MED20 and SRB6/MED22, the middle module contains MED1, MED4, NUT1/MED5, MED7, CSE2/MED9, NUT2/MED10, SRB7/MED21 and SOH1/MED31, and the tail module contains MED2, PGD1/MED3, RGR1/MED14, GAL11/MED15 and SIN4/MED16. The head and the middle modules interact directly with RNA polymerase II, whereas the elongated tail module interacts with gene-specific regulatory proteins.

It is found in the nucleus. Its function is as follows. Component of the Mediator complex, a coactivator involved in the regulated transcription of nearly all RNA polymerase II-dependent genes. Mediator functions as a bridge to convey information from gene-specific regulatory proteins to the basal RNA polymerase II transcription machinery. The Mediator complex, having a compact conformation in its free form, is recruited to promoters by direct interactions with regulatory proteins and serves for the assembly of a functional preinitiation complex with RNA polymerase II and the general transcription factors. The Mediator complex unfolds to an extended conformation and partially surrounds RNA polymerase II, specifically interacting with the unphosphorylated form of the C-terminal domain (CTD) of RNA polymerase II. The Mediator complex dissociates from the RNA polymerase II holoenzyme and stays at the promoter when transcriptional elongation begins. The sequence is that of Mediator of RNA polymerase II transcription subunit 31 (SOH1) from Saccharomyces cerevisiae (strain ATCC 204508 / S288c) (Baker's yeast).